A 609-amino-acid chain; its full sequence is Glutamine--fructose-6-phosphate aminotransferase [isomerizing] (609 aa).

C2 functions as the Nucleophile; for GATase activity in the catalytic mechanism. Residues C2–G219 enclose the Glutamine amidotransferase type-2 domain. SIS domains follow at residues I280–T426 and W458–P599. The For Fru-6P isomerization activity role is filled by K604.

As to quaternary structure, homodimer.

It localises to the cytoplasm. The enzyme catalyses D-fructose 6-phosphate + L-glutamine = D-glucosamine 6-phosphate + L-glutamate. Functionally, catalyzes the first step in hexosamine metabolism, converting fructose-6P into glucosamine-6P using glutamine as a nitrogen source. The polypeptide is Glutamine--fructose-6-phosphate aminotransferase [isomerizing] (Chlamydia abortus (strain DSM 27085 / S26/3) (Chlamydophila abortus)).